Reading from the N-terminus, the 326-residue chain is uncharacterized protein (326 aa).

127 to 134 (GATGSGKS) is a binding site for ATP.

This sequence belongs to the GSP E family.

This is an uncharacterized protein from Escherichia coli (strain K12).